A 447-amino-acid polypeptide reads, in one-letter code: Tubulin beta-2 chain (447 aa).

Glutamine 11, glutamate 69, serine 138, glycine 142, threonine 143, glycine 144, asparagine 204, and asparagine 226 together coordinate GTP. Glutamate 69 serves as a coordination point for Mg(2+). The segment at 419–447 is disordered; the sequence is VSEYQQYQDATADDEGEYEDEEEEADLQD. Residues 429-447 are compositionally biased toward acidic residues; sequence TADDEGEYEDEEEEADLQD.

Belongs to the tubulin family. In terms of assembly, dimer of alpha and beta chains. A typical microtubule is a hollow water-filled tube with an outer diameter of 25 nm and an inner diameter of 15 nM. Alpha-beta heterodimers associate head-to-tail to form protofilaments running lengthwise along the microtubule wall with the beta-tubulin subunit facing the microtubule plus end conferring a structural polarity. Microtubules usually have 13 protofilaments but different protofilament numbers can be found in some organisms and specialized cells. Requires Mg(2+) as cofactor. In terms of tissue distribution, expressed in leaf sheaths and suspension cultured cells.

It localises to the cytoplasm. The protein localises to the cytoskeleton. Functionally, tubulin is the major constituent of microtubules, a cylinder consisting of laterally associated linear protofilaments composed of alpha- and beta-tubulin heterodimers. Microtubules grow by the addition of GTP-tubulin dimers to the microtubule end, where a stabilizing cap forms. Below the cap, tubulin dimers are in GDP-bound state, owing to GTPase activity of alpha-tubulin. In Oryza sativa subsp. japonica (Rice), this protein is Tubulin beta-2 chain (TUBB2).